Here is a 105-residue protein sequence, read N- to C-terminus: Synaptic plasticity regulator PANTS (105 aa).

This sequence belongs to the UPF0545 family. In terms of assembly, interacts with RTN4 isoform A/Nogo-A; the interaction results in enhanced RTN4-mediated inhibition of AMPA receptor clustering. Also interacts with NCAM1, RANBP2 and CCT8. Post-translationally, rapidly degraded by proteolysis following neuronal stimulation, resulting in increased AMPA receptor clustering. In terms of tissue distribution, in the postnatal brain, expressed diffusely throughout the hippocampus at a low level at 8 weeks (at protein level). At 16 weeks, strongly expressed in the stratum lucidum of the hippocampus (at protein level). In developing and aging brain, expression is strongest in hippocampus, especially in areas CA3 and CA2, throughout the dorsoventral axis.

It localises to the synapse. Its subcellular location is the synaptic cleft. Its function is as follows. Negatively regulates long-term potentiation and modulates adult synaptic plasticity. Stabilizes the interaction of RTN4 isoform A/Nogo-A with its receptors, inhibiting clustering of postsynaptic AMPA receptors at synaptic sites. Upon neuronal stimulation, degraded at synapses, reducing RTN4 signaling and allowing AMPA receptor clustering at individual synapses. The chain is Synaptic plasticity regulator PANTS from Mus musculus (Mouse).